The sequence spans 288 residues: NAD kinase (288 aa).

Aspartate 73 (proton acceptor) is an active-site residue. NAD(+) is bound by residues 73 to 74 (DG), arginine 78, 144 to 145 (NE), aspartate 174, 185 to 190 (TAYSLS), and alanine 209.

This sequence belongs to the NAD kinase family. A divalent metal cation is required as a cofactor.

The protein resides in the cytoplasm. It carries out the reaction NAD(+) + ATP = ADP + NADP(+) + H(+). Its function is as follows. Involved in the regulation of the intracellular balance of NAD and NADP, and is a key enzyme in the biosynthesis of NADP. Catalyzes specifically the phosphorylation on 2'-hydroxyl of the adenosine moiety of NAD to yield NADP. In Porphyromonas gingivalis (strain ATCC 33277 / DSM 20709 / CIP 103683 / JCM 12257 / NCTC 11834 / 2561), this protein is NAD kinase.